The primary structure comprises 277 residues: Probable septum site-determining protein MinC (277 aa).

The segment at 137–164 is disordered; the sequence is ATTGNAPAEPAPAEPAAPAAAPQPPAVP. Positions 145–164 are enriched in pro residues; the sequence is EPAPAEPAAPAAAPQPPAVP.

Belongs to the MinC family. Interacts with MinD and FtsZ.

In terms of biological role, cell division inhibitor that blocks the formation of polar Z ring septums. Rapidly oscillates between the poles of the cell to destabilize FtsZ filaments that have formed before they mature into polar Z rings. Prevents FtsZ polymerization. This Bordetella petrii (strain ATCC BAA-461 / DSM 12804 / CCUG 43448) protein is Probable septum site-determining protein MinC.